Consider the following 51-residue polypeptide: uncharacterized protein (51 aa).

This is an uncharacterized protein from Bacillus subtilis (strain 168).